The chain runs to 248 residues: Small ribosomal subunit protein eS1 (248 aa).

The tract at residues 1-21 is disordered; that stretch reads MAVGKDKRISKGKKGGKKKIV.

This sequence belongs to the eukaryotic ribosomal protein eS1 family. In terms of assembly, component of the small ribosomal subunit. Mature ribosomes consist of a small (40S) and a large (60S) subunit. The 40S subunit contains about 33 different proteins and 1 molecule of RNA (18S). The 60S subunit contains about 49 different proteins and 3 molecules of RNA (25S, 5.8S and 5S).

Its subcellular location is the cytoplasm. The sequence is that of Small ribosomal subunit protein eS1 from Syntrichia ruralis (Great hairy screw-moss).